A 357-amino-acid chain; its full sequence is Histidinol-phosphate aminotransferase 2 (357 aa).

Lysine 216 is modified (N6-(pyridoxal phosphate)lysine).

This sequence belongs to the class-II pyridoxal-phosphate-dependent aminotransferase family. Histidinol-phosphate aminotransferase subfamily. In terms of assembly, homodimer. The cofactor is pyridoxal 5'-phosphate.

The enzyme catalyses L-histidinol phosphate + 2-oxoglutarate = 3-(imidazol-4-yl)-2-oxopropyl phosphate + L-glutamate. It participates in amino-acid biosynthesis; L-histidine biosynthesis; L-histidine from 5-phospho-alpha-D-ribose 1-diphosphate: step 7/9. The polypeptide is Histidinol-phosphate aminotransferase 2 (Idiomarina loihiensis (strain ATCC BAA-735 / DSM 15497 / L2-TR)).